The sequence spans 283 residues: Pantothenate synthetase (283 aa).

ATP is bound at residue 30-37 (MGYLHEGH). Catalysis depends on His37, which acts as the Proton donor. Gln61 is a (R)-pantoate binding site. Gln61 is a beta-alanine binding site. An ATP-binding site is contributed by 147–150 (GQKD). Residue Gln153 coordinates (R)-pantoate. Residues Val176 and 184-187 (MSSR) contribute to the ATP site.

Belongs to the pantothenate synthetase family. In terms of assembly, homodimer.

The protein localises to the cytoplasm. It carries out the reaction (R)-pantoate + beta-alanine + ATP = (R)-pantothenate + AMP + diphosphate + H(+). It participates in cofactor biosynthesis; (R)-pantothenate biosynthesis; (R)-pantothenate from (R)-pantoate and beta-alanine: step 1/1. Catalyzes the condensation of pantoate with beta-alanine in an ATP-dependent reaction via a pantoyl-adenylate intermediate. This Thermoanaerobacter sp. (strain X514) protein is Pantothenate synthetase.